We begin with the raw amino-acid sequence, 483 residues long: Uridine/cytidine kinase UKL1, chloroplastic (483 aa).

The transit peptide at 1-47 directs the protein to the chloroplast; that stretch reads MPEDSTAIDYVMEKASGPHFSGLRLDGLLSSPSKSSVSSPSHFRLSN. Residues 59–264 form a uridine kinase region; that stretch reads PHQPFVIGVT…IVQHIHTKLG (206 aa). A uracil phosphoribosyltransferase region spans residues 274–483; the sequence is NVFVIETTFQ…FGDRYFGTDE (210 aa). Residues Lys-298, Arg-307, and 341–344 contribute to the GTP site; that span reads CKKL. 5-phospho-alpha-D-ribose 1-diphosphate is bound by residues Arg-351 and Arg-376. A GTP-binding site is contributed by Arg-396. Residues Asp-402, 407 to 410, and Glu-473 contribute to the 5-phospho-alpha-D-ribose 1-diphosphate site; that span reads TGNS. Residue 472–474 coordinates uracil; the sequence is GEF.

In the N-terminal section; belongs to the uridine kinase family. This sequence in the C-terminal section; belongs to the UPRTase family.

It localises to the plastid. The protein resides in the chloroplast. The catalysed reaction is cytidine + ATP = CMP + ADP + H(+). It catalyses the reaction uridine + ATP = UMP + ADP + H(+). It functions in the pathway pyrimidine metabolism; CTP biosynthesis via salvage pathway; CTP from cytidine: step 1/3. It participates in pyrimidine metabolism; UMP biosynthesis via salvage pathway; UMP from uridine: step 1/1. Functionally, involved in the pyrimidine salvage pathway. Phosphorylates uridine to uridine monophosphate (UMP). Phosphorylates cytidine to cytidine monophosphate (CMP). Does not possess uracil phosphoribosyltransferase (UPRTase) activity that catalyzes the conversion of uracil and 5-phospho-alpha-D-ribose 1-diphosphate (PRPP) to UMP and diphosphate. In Arabidopsis thaliana (Mouse-ear cress), this protein is Uridine/cytidine kinase UKL1, chloroplastic.